Consider the following 31-residue polypeptide: Cytochrome b6-f complex subunit 6 (31 aa).

The helical transmembrane segment at 3-23 (TITSYFGFLLAVLTITSGLFI) threads the bilayer.

Belongs to the PetL family. In terms of assembly, the 4 large subunits of the cytochrome b6-f complex are cytochrome b6, subunit IV (17 kDa polypeptide, PetD), cytochrome f and the Rieske protein, while the 4 small subunits are PetG, PetL, PetM and PetN. The complex functions as a dimer.

It is found in the plastid. The protein resides in the chloroplast thylakoid membrane. Component of the cytochrome b6-f complex, which mediates electron transfer between photosystem II (PSII) and photosystem I (PSI), cyclic electron flow around PSI, and state transitions. PetL is important for photoautotrophic growth as well as for electron transfer efficiency and stability of the cytochrome b6-f complex. The polypeptide is Cytochrome b6-f complex subunit 6 (Lotus japonicus (Lotus corniculatus var. japonicus)).